Here is a 680-residue protein sequence, read N- to C-terminus: MLPDFTPIEKLTTQDAQQETARLQKQLVQYGTAYYEDDAPLVEDYIYDALYARLVALEEKFPQYVIPDSPTQNVGSADTKSELQKVVHPAPMLSLGDVFSLDELNDWDARTTKSLGNQAPYNLELKIDGLAVALTYVDGQLVQASTRGNGIVGEDVTANVKTIKAIPKKLTEPLTIEVRGEIYMPKASFAALNKQREADGLEPFANPRNAAAGSLRQLNVKITKSRNLAAFVYYTAEPEMLGVTTQSGALERFAELGLPTDTHNRVINKMADIADYIDEYTSERESLSYGIDGVVVKVNQLDLQFDLGNTVKIPRWAIAYKFPPEEALTIVCDIEWTVGRTGAVTPTAVMDPVLLAGTTVQRASLHNPDYLREKDIQIGDTVTLHKAGDIIPEIGQVILEKRPTDSETYQVPTICPACESNLVHIEGEVALRCINPFCSAQIQEGLTHFASRNAMNIDGMGPRVVGQLLKAGYIKDVASIYRITVEQLLTLDKFQEKSAVKLIDAINSSKENSLERLLFGLGIRMVGAKAARLIAEKFRTLSAVSEASVEDIANINGIGHTIAQSIVQYFSTPESKQLLVELASSGVNQSYLSDTVIDENSFFYGKKVVLTGKLEQSSRPAATKWLQDHGANVAGSVSVKTDLVIAGEAAGSKLDKASQLGVTVWTEQQFVDEQVKEDGK.

Residues 44-48 (DYIYD), 94-95 (SL), and Glu124 each bind NAD(+). The active-site N6-AMP-lysine intermediate is the Lys126. Residues Arg147, Glu181, Lys297, and Lys321 each contribute to the NAD(+) site. Residues Cys415, Cys418, Cys433, and Cys438 each coordinate Zn(2+). The 83-residue stretch at 598–680 (DENSFFYGKK…VDEQVKEDGK (83 aa)) folds into the BRCT domain.

It belongs to the NAD-dependent DNA ligase family. LigA subfamily. Mg(2+) is required as a cofactor. It depends on Mn(2+) as a cofactor.

The enzyme catalyses NAD(+) + (deoxyribonucleotide)n-3'-hydroxyl + 5'-phospho-(deoxyribonucleotide)m = (deoxyribonucleotide)n+m + AMP + beta-nicotinamide D-nucleotide.. In terms of biological role, DNA ligase that catalyzes the formation of phosphodiester linkages between 5'-phosphoryl and 3'-hydroxyl groups in double-stranded DNA using NAD as a coenzyme and as the energy source for the reaction. It is essential for DNA replication and repair of damaged DNA. The sequence is that of DNA ligase from Leuconostoc mesenteroides subsp. mesenteroides (strain ATCC 8293 / DSM 20343 / BCRC 11652 / CCM 1803 / JCM 6124 / NCDO 523 / NBRC 100496 / NCIMB 8023 / NCTC 12954 / NRRL B-1118 / 37Y).